Consider the following 481-residue polypeptide: MSLRVYNTMTGRKEEFEPLQPGKVGMYVCGVTVYDYCHIGHARANVVFDIIYRYLQFIGFDVTYVRNYTDVDDKIIKRANERGISSDTLAGEFIQAFDEDMNRLGLAEPTIQPKATCHIDHIVNLVQRLIDRGIAYESQGDVYFSVEDFPSYLKLSKRNMDEMRSGARITPGEQKRNPMDFALWKAAKPGEPSWESPWGPGRPGWHIECSAMSMEYLGESFDIHGGGKDLVFPHHENEIAQSEGATGKPFVKYWLHNGFVNVNQEKMSKSLGNFFTIRDILQTYDPEVLRFFILTAHYRSPIDFSDQNLQDARLGLSRFYEGLHAASEVLAACPPGDVTSEAGATLENVFREAMDDDFNTAAAIGHLFDAVRTINRLITEKGFRKNREKVAQVRALYDALLKLGGVLGLFVSDPAAWLKQMNLAMLATTGYTESDIEDFIRQRQEARKNKDFARADEIRDELAAKGIQLLDGPQGTAWKAR.

Cys29 contacts Zn(2+). The short motif at 31-41 is the 'HIGH' region element; that stretch reads VTVYDYCHIGH. 3 residues coordinate Zn(2+): Cys209, His234, and Glu238. The 'KMSKS' region signature appears at 266–270; it reads KMSKS. Residue Lys269 coordinates ATP.

It belongs to the class-I aminoacyl-tRNA synthetase family. Monomer. Requires Zn(2+) as cofactor.

Its subcellular location is the cytoplasm. The enzyme catalyses tRNA(Cys) + L-cysteine + ATP = L-cysteinyl-tRNA(Cys) + AMP + diphosphate. This Syntrophotalea carbinolica (strain DSM 2380 / NBRC 103641 / GraBd1) (Pelobacter carbinolicus) protein is Cysteine--tRNA ligase.